The primary structure comprises 232 residues: Ubiquinone biosynthesis O-methyltransferase (232 aa).

Residues arginine 36, glycine 55, aspartate 76, and leucine 120 each coordinate S-adenosyl-L-methionine.

It belongs to the methyltransferase superfamily. UbiG/COQ3 family.

It catalyses the reaction a 3-demethylubiquinol + S-adenosyl-L-methionine = a ubiquinol + S-adenosyl-L-homocysteine + H(+). It carries out the reaction a 3-(all-trans-polyprenyl)benzene-1,2-diol + S-adenosyl-L-methionine = a 2-methoxy-6-(all-trans-polyprenyl)phenol + S-adenosyl-L-homocysteine + H(+). It participates in cofactor biosynthesis; ubiquinone biosynthesis. In terms of biological role, O-methyltransferase that catalyzes the 2 O-methylation steps in the ubiquinone biosynthetic pathway. The protein is Ubiquinone biosynthesis O-methyltransferase of Pseudomonas syringae pv. tomato (strain ATCC BAA-871 / DC3000).